A 1155-amino-acid chain; its full sequence is Polarized growth protein rax2 (1155 aa).

An N-terminal signal peptide occupies residues 1 to 27; sequence MAIYSSFWIRLYFTFRFFCYFLTSVVA. Over 28–1105 the chain is Extracellular; that stretch reads SDVSFLGDFS…KYDHIGQPRY (1078 aa). Residues N44, N61, N103, N118, N124, N156, N161, N182, N190, N213, N224, N306, N391, N413, N419, N510, N519, N554, N562, N607, N630, N713, N722, N743, N769, N793, N807, N824, N840, N848, N876, N893, N899, N916, N945, N1009, N1030, and N1055 are each glycosylated (N-linked (GlcNAc...) asparagine). A helical membrane pass occupies residues 1106-1126; that stretch reads VVIISLGISIGVMFLIMSGSI. Over 1127-1155 the chain is Cytoplasmic; the sequence is VVEIIHWFFSEHVETLHDYSNFLKELKTQ.

The protein belongs to the RAX2 family. In terms of assembly, interacts with for3 and tea1.

The protein resides in the cell membrane. Functionally, controls cell polarity, through the G1 phase of mitosis, via regulation of for3 localization. Required for actin cable formation where it directs the spatial distribution of the actin cables. This Schizosaccharomyces pombe (strain 972 / ATCC 24843) (Fission yeast) protein is Polarized growth protein rax2.